Here is an 838-residue protein sequence, read N- to C-terminus: Shutoff protein (838 aa).

The tract at residues 1–102 (MEDQHSAASE…EQEEDSPDRY (102 aa)) is disordered. Over residues 18–35 (TLPPPPPPPPPPTSPPPS) the composition is skewed to pro residues. Over residues 52 to 65 (TCSSSSSSSASSEC) the composition is skewed to low complexity. The interval 291–353 (LMQTLLVRRA…ACMVTVQLHC (63 aa)) is binding to host EIF4G. The region spanning 356–474 (TFLTSREMVR…SLWTGFDERT (119 aa)) is the RRM domain. Phosphotyrosine; by host is present on residues tyrosine 373 and tyrosine 690. The segment at 693 to 838 (PHTGEELNTA…QELRRPQRGS (146 aa)) is disordered. Positions 701–710 (TAAPSTAHHA) are enriched in low complexity. 2 stretches are compositionally biased toward basic and acidic residues: residues 737 to 746 (SYADRVRSEL) and 770 to 787 (HSRDAARRRGSQQRDQRQ). The segment covering 813 to 829 (QALLHQQQQQQEHQPAQ) has biased composition (low complexity).

Belongs to the adenoviridae shutoff protein family. Monomer. Interacts with hexon protein; this interaction allows chaperoning and trimerization of hexon proteins. Interacts (via N-terminus) with host initiation factor EIF4G (via C-terminus). Interacts (via RRM domain) with viral mRNAs that contain the tripartite leader; this interaction allows ribosome shunting and expression of viral late mRNAs. Might be cleaved by the viral protease. Post-translationally, phosphorylated. Tyrosine phosphorylation enhances preferential binding to tripartite leader mRNAs and allows ribosome shunting. In terms of processing, methylated. Asymmetric dimethylation by host PRMT1 of the Arg/Gly-rich region may regulate shutoff protein binding to hexon and promote the capsid assembly in the nucleus.

The protein resides in the host cytoplasm. Protein that inhibits host translation while promoting late viral translation by ribosome shunting. Blocks host cap-dependent translation by binding to eIF4G, displacing MKNK1 from cap initiation complexes and preventing EIF4E phosphorylation. Binds to the tripartite leader sequence of viral late mRNAs and recruits host eIF4G, PABPC1/poly-A binding protein and 40S ribosomes subunits on viral mRNAs, allowing ribosome shunting and efficient translation of late viral mRNAs even though conventional translation via ribosome scanning from the cap has been shut off in the host cell. During assembly, acts as a chaperone protein that helps hexon proteins assembly into trimers. In Porcine adenovirus A serotype 3 (PAdV-3), this protein is Shutoff protein.